A 222-amino-acid chain; its full sequence is MVLLSKFDFSGKESGKFELPDAFFTEGKEQSVKDYLVAIQANKRQWSACTRGRSEVSHSTKKPFRQKGTGNARQGCLAAPQFRGGGIVFGPKPKFDQHIRINKKERRAAIRLLLAQKIQTGKLIVAENSVFVSSLDAPKTKEALRFLKECNVECRGVLFVDGLAHVGSNENLRLSVRNLSAVRGFTYGENISGYDIAAARNIVVSEKALELLVESLVSTTKD.

The interval 50–72 is disordered; sequence TRGRSEVSHSTKKPFRQKGTGNA.

This sequence belongs to the universal ribosomal protein uL4 family. Part of the 50S ribosomal subunit.

One of the primary rRNA binding proteins, this protein initially binds near the 5'-end of the 23S rRNA. It is important during the early stages of 50S assembly. It makes multiple contacts with different domains of the 23S rRNA in the assembled 50S subunit and ribosome. Its function is as follows. Forms part of the polypeptide exit tunnel. The protein is Large ribosomal subunit protein uL4 of Chlamydia trachomatis serovar A (strain ATCC VR-571B / DSM 19440 / HAR-13).